The chain runs to 188 residues: E3 ubiquitin-protein ligase RNF183 (188 aa).

At 1–157 the chain is on the cytoplasmic side; it reads MAEQQGREPE…RECFRNPHFR (157 aa). The RING-type zinc finger occupies 11–58; the sequence is CPVCWNPFNNTFHTPKVLDCCHSFCVECLAHISLVTPTRRRLLCPLCR. The helical; Anchor for type IV membrane protein transmembrane segment at 158–178 threads the bilayer; the sequence is IFAYMMAVILCGTVLFIFSIF. Residues 179–188 are Lumenal-facing; that stretch reads CTRRFFWGVG.

As to quaternary structure, interacts with FATE1. Interacts with SEC16A. Interacts with BCL2L1. Autoubiquitinated (in vitro).

Its subcellular location is the endoplasmic reticulum membrane. It is found in the endoplasmic reticulum. The protein localises to the golgi apparatus. The protein resides in the cis-Golgi network membrane. It localises to the lysosome. The enzyme catalyses S-ubiquitinyl-[E2 ubiquitin-conjugating enzyme]-L-cysteine + [acceptor protein]-L-lysine = [E2 ubiquitin-conjugating enzyme]-L-cysteine + N(6)-ubiquitinyl-[acceptor protein]-L-lysine.. It participates in protein modification; protein ubiquitination. Its function is as follows. Acts as an E3 ubiquitin ligase catalyzing the covalent attachment of ubiquitin moieties onto substrate proteins. Triggers apoptosis in response to prolonged ER stress by mediating the polyubiquitination and subsequent proteasomal degradation of BCL2L1. May collaborate with FATE1 to restrain BIK protein levels thus regulating apoptotic signaling. The protein is E3 ubiquitin-protein ligase RNF183 (RNF183) of Bos taurus (Bovine).